Consider the following 203-residue polypeptide: Urease accessory protein UreG (203 aa).

14-21 (GPVGSGKT) lines the GTP pocket.

The protein belongs to the SIMIBI class G3E GTPase family. UreG subfamily. In terms of assembly, homodimer. UreD, UreF and UreG form a complex that acts as a GTP-hydrolysis-dependent molecular chaperone, activating the urease apoprotein by helping to assemble the nickel containing metallocenter of UreC. The UreE protein probably delivers the nickel.

The protein localises to the cytoplasm. Functionally, facilitates the functional incorporation of the urease nickel metallocenter. This process requires GTP hydrolysis, probably effectuated by UreG. This is Urease accessory protein UreG from Rhizobium leguminosarum bv. trifolii (strain WSM2304).